The primary structure comprises 414 residues: Histidine--tRNA ligase (414 aa).

This sequence belongs to the class-II aminoacyl-tRNA synthetase family. As to quaternary structure, homodimer.

The protein resides in the cytoplasm. The enzyme catalyses tRNA(His) + L-histidine + ATP = L-histidyl-tRNA(His) + AMP + diphosphate + H(+). In Mycoplasma pneumoniae (strain ATCC 29342 / M129 / Subtype 1) (Mycoplasmoides pneumoniae), this protein is Histidine--tRNA ligase (hisS).